A 79-amino-acid chain; its full sequence is Translational regulator CsrA (79 aa).

This sequence belongs to the CsrA/RsmA family. Homodimer; the beta-strands of each monomer intercalate to form a hydrophobic core, while the alpha-helices form wings that extend away from the core.

The protein localises to the cytoplasm. Its function is as follows. A translational regulator that binds mRNA to regulate translation initiation and/or mRNA stability. Usually binds in the 5'-UTR at or near the Shine-Dalgarno sequence preventing ribosome-binding, thus repressing translation. Its main target seems to be the major flagellin gene, while its function is anatagonized by FliW. In Maridesulfovibrio salexigens (strain ATCC 14822 / DSM 2638 / NCIMB 8403 / VKM B-1763) (Desulfovibrio salexigens), this protein is Translational regulator CsrA.